The chain runs to 657 residues: L-type lectin-domain containing receptor kinase I.8 (657 aa).

Positions 1–23 (MAPGLDLIWMVISFLLLIHLSSQ) are cleaved as a signal peptide. Over 24–282 (QETGFSFNGF…QVPHPKMKTS (259 aa)) the chain is Extracellular. The interval 25–257 (ETGFSFNGFR…NHYILGWSFS (233 aa)) is legume-lectin like. Residues asparagine 74, asparagine 124, asparagine 181, asparagine 204, and asparagine 225 are each glycosylated (N-linked (GlcNAc...) asparagine). The chain crosses the membrane as a helical span at residues 283–303 (LLLILLLIVLGIILLVLLVGA). Topologically, residues 304–657 (YLYRRNKYAE…THSIQYGIGR (354 aa)) are cytoplasmic. The region spanning 339–611 (FHKDGFLGKG…VQYLDRQVSL (273 aa)) is the Protein kinase domain. ATP-binding positions include 345–353 (LGKGGFGEV) and lysine 366. Aspartate 462 functions as the Proton acceptor in the catalytic mechanism.

It in the C-terminal section; belongs to the protein kinase superfamily. Ser/Thr protein kinase family. This sequence in the N-terminal section; belongs to the leguminous lectin family.

It is found in the cell membrane. The catalysed reaction is L-seryl-[protein] + ATP = O-phospho-L-seryl-[protein] + ADP + H(+). The enzyme catalyses L-threonyl-[protein] + ATP = O-phospho-L-threonyl-[protein] + ADP + H(+). Its function is as follows. Involved in resistance response to the pathogenic fungus Alternaria brassicicola. This is L-type lectin-domain containing receptor kinase I.8 from Arabidopsis thaliana (Mouse-ear cress).